The sequence spans 120 residues: NAD(P)H-quinone oxidoreductase subunit 3 (120 aa).

3 helical membrane passes run 1-21 (MFVLSGYEYLLGFFIICSLVP), 64-84 (MFALVFVVFDVETVFLYPWAV), and 89-109 (LGLLAFIEALVFIAILVVALV).

Belongs to the complex I subunit 3 family. In terms of assembly, NDH-1 can be composed of about 15 different subunits; different subcomplexes with different compositions have been identified which probably have different functions.

Its subcellular location is the cellular thylakoid membrane. The enzyme catalyses a plastoquinone + NADH + (n+1) H(+)(in) = a plastoquinol + NAD(+) + n H(+)(out). It catalyses the reaction a plastoquinone + NADPH + (n+1) H(+)(in) = a plastoquinol + NADP(+) + n H(+)(out). NDH-1 shuttles electrons from an unknown electron donor, via FMN and iron-sulfur (Fe-S) centers, to quinones in the respiratory and/or the photosynthetic chain. The immediate electron acceptor for the enzyme in this species is believed to be plastoquinone. Couples the redox reaction to proton translocation, and thus conserves the redox energy in a proton gradient. Cyanobacterial NDH-1 also plays a role in inorganic carbon-concentration. This is NAD(P)H-quinone oxidoreductase subunit 3 from Nostoc punctiforme (strain ATCC 29133 / PCC 73102).